The chain runs to 372 residues: Lipid-A-disaccharide synthase (372 aa).

It belongs to the LpxB family.

The catalysed reaction is a lipid X + a UDP-2-N,3-O-bis[(3R)-3-hydroxyacyl]-alpha-D-glucosamine = a lipid A disaccharide + UDP + H(+). It participates in bacterial outer membrane biogenesis; LPS lipid A biosynthesis. In terms of biological role, condensation of UDP-2,3-diacylglucosamine and 2,3-diacylglucosamine-1-phosphate to form lipid A disaccharide, a precursor of lipid A, a phosphorylated glycolipid that anchors the lipopolysaccharide to the outer membrane of the cell. The polypeptide is Lipid-A-disaccharide synthase (Thiobacillus denitrificans (strain ATCC 25259 / T1)).